A 141-amino-acid chain; its full sequence is Protein KRTCAP2 homolog (141 aa).

The next 4 helical transmembrane spans lie at 11–31 (VVSS…LRFC), 42–62 (VLLG…CVSN), 74–94 (AKLL…AGLV), and 97–117 (VCAT…NRIS).

Belongs to the KRTCAP2 family. In terms of assembly, component of the oligosaccharyltransferase (OST) complex.

It is found in the membrane. Functionally, subunit of the oligosaccharyl transferase (OST) complex that catalyzes the initial transfer of a defined glycan (Glc(3)Man(9)GlcNAc(2) in eukaryotes) from the lipid carrier dolichol-pyrophosphate to an asparagine residue within an Asn-X-Ser/Thr consensus motif in nascent polypeptide chains, the first step in protein N-glycosylation. N-glycosylation occurs cotranslationally and the complex associates with the Sec61 complex at the channel-forming translocon complex that mediates protein translocation across the endoplasmic reticulum (ER). All subunits are required for a maximal enzyme activity. The polypeptide is Protein KRTCAP2 homolog (Drosophila melanogaster (Fruit fly)).